Reading from the N-terminus, the 148-residue chain is Putative nickel-responsive regulator (148 aa).

Residues histidine 88, histidine 99, histidine 101, and cysteine 107 each contribute to the Ni(2+) site.

It belongs to the transcriptional regulatory CopG/NikR family. As to quaternary structure, homotetramer. Ni(2+) is required as a cofactor.

Its function is as follows. Transcriptional regulator. The chain is Putative nickel-responsive regulator from Helicobacter pylori (strain ATCC 700392 / 26695) (Campylobacter pylori).